Here is a 196-residue protein sequence, read N- to C-terminus: ATP-dependent Clp protease proteolytic subunit (196 aa).

The active-site Nucleophile is Ser96. His121 is an active-site residue.

Belongs to the peptidase S14 family. In terms of assembly, fourteen ClpP subunits assemble into 2 heptameric rings which stack back to back to give a disk-like structure with a central cavity, resembling the structure of eukaryotic proteasomes.

The protein localises to the cytoplasm. The enzyme catalyses Hydrolysis of proteins to small peptides in the presence of ATP and magnesium. alpha-casein is the usual test substrate. In the absence of ATP, only oligopeptides shorter than five residues are hydrolyzed (such as succinyl-Leu-Tyr-|-NHMec, and Leu-Tyr-Leu-|-Tyr-Trp, in which cleavage of the -Tyr-|-Leu- and -Tyr-|-Trp bonds also occurs).. In terms of biological role, cleaves peptides in various proteins in a process that requires ATP hydrolysis. Has a chymotrypsin-like activity. Plays a major role in the degradation of misfolded proteins. The chain is ATP-dependent Clp protease proteolytic subunit from Streptococcus pneumoniae (strain 70585).